Consider the following 415-residue polypeptide: Peptide chain release factor subunit 1 (415 aa).

The protein belongs to the eukaryotic release factor 1 family. In terms of assembly, heterodimer of two subunits, one of which binds GTP.

The protein resides in the cytoplasm. In terms of biological role, directs the termination of nascent peptide synthesis (translation) in response to the termination codons UAA, UAG and UGA. The polypeptide is Peptide chain release factor subunit 1 (Thermococcus sibiricus (strain DSM 12597 / MM 739)).